Consider the following 1183-residue polypeptide: MYLKAVEINGFKSFGDKVYIDFNRGITSIVGPNGSGKSNILDAVLWVLGEQSYKNIRAKESQDVIFSGGKEKKPATKAEVSLIIDNADRYLDLDNDTVKITRRIHISGENEYLINDTKSRLKEIGTLFLDTGIGKTAYSVIGQGKVERIINSSPKEIKSIIEEAAGIKKLQANRIEAQKNLANIEINLDKVEFILNETRENKNKIEKQAELAQKYIDLRDEKSSLAKGIYITELEQKEKNLSENENIKEKYQTECFELQEKLNKTLERLNTIDLEKEEVKKEKLLIDSRNKELRNIISEKEKEKAVTSERLDNVKKEKLVKEEYILHLDNKIEKKLEEVTESKNKKDEISKNIVEMAAANKEFENKIFNLENIKVEKFDLIENRAKKVRDLELEKQLASNEIENNEKKLKSSQDEVENFKQELEEANKKLLANNKEKDLVHSQLEARKEELTKTEERNEFLVNQLSEISKSINKLSQDIREFEYQEKTSSGKLEALVRMDENNEGFFKGVKEVLNSGISGIDGVLISLINFDEKYEKAVEAAIPGNLQDIIVEDKEVAKKCIAFLTEKKLGRTSFLALDTIKPNRREFKANINGVLGLTADLITADKKYQKVIDFIFGGLLIVENIDIATDILNKNLFSGNIVTLTGELVSSRGRITGGENQKSTINQIFERKKEIKTLEEKVTDLKSKITEGSKKREDLSIKLENYENEVDKIDSLEDSIRKDIDLLKKDFESLSEKSEKLSKDIRSISFNIEDAEKYKTSYQDRINSSFSTIEETEKHIASLKKDIEADENLLKQTISEIDSLNKQFSDTRILFLNNQSTIEQLEKDIHSKEIENVELQEEKEKNSKIVIELSHNIEELETLEEELQSQIEEHTKIYNSENRDIETLNEREQNLSNEERELSKDKSKLETDSLHANDRFEKIVEVIEKIKVDILNINEKLNELVEITAQVIEVEKLKSSKDRLRSLENKINNFGDVNLLAINEFKELKERYDYLARERDDVVKSRKQVMDLIQEIDERIHEDFHTTYQNINENFNKMCDETIRNTEGRLNIINPEDFENCGIEIFVKFKNKKKQPLSLLSGGEKSMVAIAFIMAIFMYKPSPFTFLDEIEAALDEKNTKNLLGKLRDFTDKSQFILITHNKETMKESDSIFGVTMNKEIGISKIVSPDKITKILSENKENN.

32-39 (PNGSGKSN) serves as a coordination point for ATP. Residues 162 to 483 (EEAAGIKKLQ…KLSQDIREFE (322 aa)) are a coiled coil. The SMC hinge domain maps to 519 to 632 (SGIDGVLISL…VENIDIATDI (114 aa)). The stretch at 666–1019 (INQIFERKKE…VMDLIQEIDE (354 aa)) forms a coiled coil.

Belongs to the SMC family. Homodimer.

Its subcellular location is the cytoplasm. Required for chromosome condensation and partitioning. This Fusobacterium nucleatum subsp. nucleatum (strain ATCC 25586 / DSM 15643 / BCRC 10681 / CIP 101130 / JCM 8532 / KCTC 2640 / LMG 13131 / VPI 4355) protein is Chromosome partition protein Smc.